A 213-amino-acid chain; its full sequence is High frequency lysogenization protein HflD (213 aa).

A coiled-coil region spans residues 99-126 (LSSAKGALDTLGNRINGLQRQLEHFDLQ).

It belongs to the HflD family. In terms of assembly, interacts with CII protein from phage lambda.

The protein resides in the cytoplasm. Its subcellular location is the cell inner membrane. In terms of biological role, negative regulator of phage lambda lysogenization. Contributes to the degradation of the phage regulatory protein CII. Acts probably by holding CII on the membrane surface, away from the target promoters, but close to the FtsH protease. The protein is High frequency lysogenization protein HflD of Escherichia coli O157:H7.